We begin with the raw amino-acid sequence, 282 residues long: D-arabinitol 2-dehydrogenase [ribulose-forming] (282 aa).

NADP(+)-binding residues include leucine 32 and asparagine 53. The active-site Proton donor is the serine 170. NADP(+)-binding residues include tyrosine 185, lysine 189, isoleucine 218, and threonine 220. Tyrosine 185 functions as the Proton acceptor in the catalytic mechanism. Lysine 189 acts as the Lowers pKa of active site Tyr in catalysis.

It belongs to the short-chain dehydrogenases/reductases (SDR) family.

The catalysed reaction is D-arabinitol + NAD(+) = D-ribulose + NADH + H(+). It functions in the pathway carbohydrate metabolism; D-arabinitol metabolism. Catalyzes the NAD(+)-dependent oxidation of D-arabinitol at carbon 4 to produce D-ribulose. This chain is D-arabinitol 2-dehydrogenase [ribulose-forming] (ARD), found in Candida tropicalis (Yeast).